The chain runs to 464 residues: Opioid growth factor receptor-like protein 1 (464 aa).

Disordered regions lie at residues 1–91 and 309–464; these read MGNL…AKPK and ENFI…TSSG. A compositionally biased stretch (basic and acidic residues) spans 43-59; the sequence is QQHDEPEQPKQPPERAG. Residues 74 to 86 show a composition bias toward low complexity; the sequence is AAGAEQGGESTEG. A compositionally biased stretch (basic and acidic residues) spans 316–325; that stretch reads PKKELPERSK. Residues 327-342 show a composition bias toward polar residues; that stretch reads QKTPTLPASGSNGQTS. 3 stretches are compositionally biased toward basic and acidic residues: residues 363-382, 390-400, and 425-439; these read SVEE…DKPS, PKPRNTEKDSA, and SEKD…KDSE. Positions 452 to 464 are enriched in polar residues; it reads AQQNATNPQTSSG.

Belongs to the opioid growth factor receptor family.

This chain is Opioid growth factor receptor-like protein 1 (Ogfrl1), found in Mus musculus (Mouse).